The chain runs to 130 residues: MADNQYYGTGRRKSSTARVFMKAGNGAITINKRDISEYFGRETARMVVRQPLELVEMLEKFDFNISVVGGGISGQAGAIRHGITRALMVFDETLRGELRKAGFVTRDARKVERKKVGLHKARKKPQFSKR.

The protein belongs to the universal ribosomal protein uS9 family.

In Colwellia psychrerythraea (strain 34H / ATCC BAA-681) (Vibrio psychroerythus), this protein is Small ribosomal subunit protein uS9.